The chain runs to 195 residues: Endoribonuclease YbeY (195 aa).

Zn(2+)-binding residues include histidine 152, histidine 156, and histidine 162.

The protein belongs to the endoribonuclease YbeY family. It depends on Zn(2+) as a cofactor.

The protein localises to the cytoplasm. Its function is as follows. Single strand-specific metallo-endoribonuclease involved in late-stage 70S ribosome quality control and in maturation of the 3' terminus of the 16S rRNA. In Rhodopseudomonas palustris (strain BisB5), this protein is Endoribonuclease YbeY.